Here is a 590-residue protein sequence, read N- to C-terminus: Protein Spindly (590 aa).

Positions 1 to 401 (MSDLEDEIKV…SMARMKALSE (401 aa)) form a coiled coil. The tract at residues 446–590 (NKAQVQKRRR…KTMANECAQQ (145 aa)) is disordered. 2 stretches are compositionally biased toward basic and acidic residues: residues 483-497 (SNEK…HPVE) and 518-527 (RESKSVRICE). Polar residues-rich tracts occupy residues 541-554 (VNDS…QTHQ) and 572-590 (QQPT…CAQQ).

This sequence belongs to the Spindly family.

The protein localises to the chromosome. The protein resides in the centromere. It is found in the kinetochore. Required for the localization of dynein and dynactin to the mitotic kintochore. Dynein is believed to control the initial lateral interaction between the kinetochore and spindle microtubules and to facilitate the subsequent formation of end-on kinetochore-microtubule attachments mediated by the NDC80 complex. May act as an adapter protein linking the dynein motor complex to various cargos. This Danio rerio (Zebrafish) protein is Protein Spindly (spdl1).